Reading from the N-terminus, the 57-residue chain is Somatostatin-2 (57 aa).

The disordered stretch occupies residues 1–26 (GRSHMVLNSALEGARGGPGGEEIPER).

This sequence belongs to the somatostatin family.

The protein resides in the secreted. Somatostatin inhibits the release of somatotropin. The sequence is that of Somatostatin-2 (sst2) from Piaractus mesopotamicus (Small-scaled pacu).